The primary structure comprises 197 residues: ATP-dependent Clp protease proteolytic subunit 1 (197 aa).

Ser-96 acts as the Nucleophile in catalysis. His-121 is an active-site residue.

This sequence belongs to the peptidase S14 family. Fourteen ClpP subunits assemble into 2 heptameric rings which stack back to back to give a disk-like structure with a central cavity, resembling the structure of eukaryotic proteasomes.

Its subcellular location is the cytoplasm. It carries out the reaction Hydrolysis of proteins to small peptides in the presence of ATP and magnesium. alpha-casein is the usual test substrate. In the absence of ATP, only oligopeptides shorter than five residues are hydrolyzed (such as succinyl-Leu-Tyr-|-NHMec, and Leu-Tyr-Leu-|-Tyr-Trp, in which cleavage of the -Tyr-|-Leu- and -Tyr-|-Trp bonds also occurs).. Cleaves peptides in various proteins in a process that requires ATP hydrolysis. Has a chymotrypsin-like activity. Plays a major role in the degradation of misfolded proteins. This is ATP-dependent Clp protease proteolytic subunit 1 from Synechococcus sp. (strain CC9902).